Reading from the N-terminus, the 210-residue chain is 2,3-bisphosphoglycerate-dependent phosphoglycerate mutase (210 aa).

Residues 9–16 (RHGQSEWN), 22–23 (TG), Arg-61, 88–91 (ERDY), Lys-99, 115–116 (RR), and 159–160 (GN) each bind substrate. His-10 functions as the Tele-phosphohistidine intermediate in the catalytic mechanism. The active-site Proton donor/acceptor is Glu-88.

The protein belongs to the phosphoglycerate mutase family. BPG-dependent PGAM subfamily. In terms of assembly, homodimer.

It carries out the reaction (2R)-2-phosphoglycerate = (2R)-3-phosphoglycerate. The protein operates within carbohydrate degradation; glycolysis; pyruvate from D-glyceraldehyde 3-phosphate: step 3/5. Functionally, catalyzes the interconversion of 2-phosphoglycerate and 3-phosphoglycerate. The sequence is that of 2,3-bisphosphoglycerate-dependent phosphoglycerate mutase from Parvibaculum lavamentivorans (strain DS-1 / DSM 13023 / NCIMB 13966).